The sequence spans 95 residues: Small ribosomal subunit protein bS6 (95 aa).

Belongs to the bacterial ribosomal protein bS6 family.

Its function is as follows. Binds together with bS18 to 16S ribosomal RNA. In Exiguobacterium sibiricum (strain DSM 17290 / CCUG 55495 / CIP 109462 / JCM 13490 / 255-15), this protein is Small ribosomal subunit protein bS6.